The sequence spans 215 residues: UPF0056 membrane protein BU267 (215 aa).

The next 6 membrane-spanning stretches (helical) occupy residues Phe14–Met34, Leu56–Ile76, Ile81–Lys101, Val120–Trp140, Leu150–Ala170, and Ile189–Ile209.

It belongs to the UPF0056 (MarC) family.

The protein resides in the cell membrane. The chain is UPF0056 membrane protein BU267 from Buchnera aphidicola subsp. Acyrthosiphon pisum (strain APS) (Acyrthosiphon pisum symbiotic bacterium).